Reading from the N-terminus, the 192-residue chain is Adenylate kinase (192 aa).

12–17 (GSGKTT) is an ATP binding site. The NMP stretch occupies residues 34–63 (STGDLLRAEVASGSELGKTIDSFISKGNLV). AMP contacts are provided by residues T35, R40, 61 to 63 (NLV), 88 to 91 (GYPR), and Q95. The LID stretch occupies residues 130 to 136 (GRNRGTD). R131 is an ATP binding site. Positions 133 and 145 each coordinate AMP. R173 serves as a coordination point for ATP.

The protein belongs to the adenylate kinase family. Monomer.

It localises to the cytoplasm. The enzyme catalyses AMP + ATP = 2 ADP. The protein operates within purine metabolism; AMP biosynthesis via salvage pathway; AMP from ADP: step 1/1. Functionally, catalyzes the reversible transfer of the terminal phosphate group between ATP and AMP. Plays an important role in cellular energy homeostasis and in adenine nucleotide metabolism. The polypeptide is Adenylate kinase (Campylobacter jejuni (strain RM1221)).